The primary structure comprises 539 residues: MVNLCNLLLKYDHFSKVEDDIFIYIDRVLENASEIYVRQQKAKRELECLEDQLAEKQKQSNRCVLPVPRSPVKRRKVQSLDSPLSAQKENVSILEDSTIFPNKSDSDVSAKLELNILDSEEPFFALTQSPPPAAAPQSPSPRAILSPRNVSKTSPLRPMQLLFPEENKSEKKPLLRESRFGKSVKLLESSSVVAEKSNTPTTPKTTPNGKWTGKNANATIETSNTDHTPPSGLKRFLSLADSNQRFRQVKLNFPRQTKQSPMNEPEHNSVNDTLFSDFVVPTPPSVANKSKFLKSLRMKKQSTLISRAQDDKPGTKGGSDETSSSTAASNERQPMFPNDNDDDDIDQTYCPGVESTSKLSKGLSFKIKQEPESQQKERIPLKVPSNKKLECLSDHILGVGEDSESNEIIVLPAPSQQSVISVAESQNATEIFISELNGENAKRMDAVTIETNPSNVPRVNRELGELSGSVKPYTRGYEQPSPQGLCIDCTMLYQYHTTRGVSNDTARSKLPRNCRNCRVAQLHSTPPGFWDPDFLPTPE.

5 N-linked (GlcNAc...) asparagine glycosylation sites follow: Asn-31, Asn-90, Asn-102, Asn-149, and Asn-167. A disordered region spans residues 126 to 153 (LTQSPPPAAAPQSPSPRAILSPRNVSKT). Residues 192–215 (VVAEKSNTPTTPKTTPNGKWTGKN) show a composition bias toward low complexity. The tract at residues 192-231 (VVAEKSNTPTTPKTTPNGKWTGKNANATIETSNTDHTPPS) is disordered. Residues 216 to 228 (ANATIETSNTDHT) are compositionally biased toward polar residues. N-linked (GlcNAc...) asparagine glycosylation is found at Asn-217, Asn-271, and Asn-288. The interval 303-355 (TLISRAQDDKPGTKGGSDETSSSTAASNERQPMFPNDNDDDDIDQTYCPGVES) is disordered. The span at 320-332 (DETSSSTAASNER) shows a compositional bias: polar residues. N-linked (GlcNAc...) asparagine glycans are attached at residues Asn-427 and Asn-503.

In terms of tissue distribution, saliva (at protein level). Female salivary gland. Female midgut.

It localises to the secreted. In terms of biological role, binds heparan sulfate proteoglycans present on the mammalian cell surface. Modulates host immune responses at the site of inoculation via decreasing the expression of TNF-alpha/TNF, IL-1beta/IL1B, IFN-gamma/IFNG, IL4, MMP9, TGF-beta and ICAM1. Its function is as follows. (Microbial infection) Interacts with the surface of Plasmodium berghei sporozoites. Promotes Plasmodium berghei transmission to the mouse host. Does not affect Plasmodium berghei sporozoite viability. Functionally, (Microbial infection) Interacts with the surface of Plasmodium falciparum sporozoites. The polypeptide is Sporozoite-associated protein (Anopheles gambiae (African malaria mosquito)).